The primary structure comprises 103 residues: Carboxysome shell protein CcmK2 (103 aa).

A BMC domain is found at 4–90 (AVGMIETRGF…PHENLEYVLP (87 aa)).

This sequence belongs to the bacterial microcompartments protein family. CcmK subfamily. In terms of assembly, homohexamer, might also make dodecamers. Interacts with full-length CcmM. Forms mixed heterohexamers of all possible stoichiometries with CcmK1, which might form dodecamers. Only very weak interactions with CcmK3 and CcmK4 were seen.

Its subcellular location is the carboxysome. Functionally, one of the shell proteins of the carboxysome, a polyhedral inclusion where RuBisCO (ribulose bisphosphate carboxylase, rbcL-rbcS) is sequestered. The central pore probably regulates metabolite flux. Hexamers make sheets that form the facets of the polyhedral carboxysome. This is Carboxysome shell protein CcmK2 from Synechocystis sp. (strain ATCC 27184 / PCC 6803 / Kazusa).